Consider the following 84-residue polypeptide: UPF0473 protein CLD_2004 (84 aa).

The protein belongs to the UPF0473 family.

This Clostridium botulinum (strain Okra / Type B1) protein is UPF0473 protein CLD_2004.